Reading from the N-terminus, the 619-residue chain is E3 ubiquitin-protein ligase complex SLX5-SLX8 subunit SLX5 (619 aa).

The tract at residues Met-1–Thr-23 is disordered. A compositionally biased stretch (low complexity) spans Ser-11–Asn-21. Residues Ser-14 and Ser-29 each carry the phosphoserine modification. Residues Val-63–Asn-90 form a disordered region. Over residues Arg-70–Asn-90 the composition is skewed to polar residues. The tract at residues Ser-201–Leu-335 is EUC1 interaction domain.

In terms of assembly, component of the heterodimeric SUMO-targeted ubiquitin ligase (STUbL) complex composed of SLX5 and SLX8. Interacts with sirtuin SIR2. Interacts with KAR9. Interacts with EUC1.

The protein localises to the nucleus. The protein resides in the chromosome. It is found in the centromere. It localises to the kinetochore. The catalysed reaction is S-ubiquitinyl-[E2 ubiquitin-conjugating enzyme]-L-cysteine + [acceptor protein]-L-lysine = [E2 ubiquitin-conjugating enzyme]-L-cysteine + N(6)-ubiquitinyl-[acceptor protein]-L-lysine.. It participates in protein modification; protein ubiquitination. Functionally, component of the SUMO-targeted ubiquitin ligase (STUbL) complex SLX5/SLX8 that mediates ubiquitination and subsequent desumoylation of sumoylated proteins and proteins containing SUMO-like domains for their degradation. The STUbL complex SLX5/SLX8 stimulates ubiquitin conjugating enzymes, including UBC1, UBC4, UBC5 and UBC13-MMS2, and mediates the proteolytic down-regulation of sumoylated proteins. The STUbL complex SLX5/SLX8 is involved in ubiquitin-mediated degradation of histone variant CSE4, preventing mislocalization to euchromatin. The complex plays an essential role in maintenance of chromosome stability and links SUMO-dependent ubiquitination to a centromere-specific function during mitosis. The complex is involved in proteolysis of spindle positioning protein KAR9 and ensures correct spindle function by regulating levels of microtubule-associated proteins. During replication, the complex helps prevent DNA lesions via recombination and has a role in localizing the DNA damage protein DCD2. The complex especially ubiquitinates the nuclease YEN1 and prevents persistent accumulation of a fraction of YEN1 associated with sites of activity in late G2/M and helps maintain the balance between pro- and anti-crossover pathways during homologous recombination. It is also involved in ubiquitin-mediated degradation of DNA repair proteins RAD52 and RAD57. Along with SIR2, promotes silencing of genes at telomeric or ribosomal DNA (rDNA) loci. Finally, the complex is recruited to distinct genomic hotspots of non-H2B protein ubiquitination (ub-hotspots) by the sumoylated transcription factor-like protein EUC1 where it ubiquitinates EUC1 and presumably other targets. The protein is E3 ubiquitin-protein ligase complex SLX5-SLX8 subunit SLX5 (SLX5) of Saccharomyces cerevisiae (strain ATCC 204508 / S288c) (Baker's yeast).